The primary structure comprises 143 residues: MAVERTLSIIKPDAVAKNVIGEILTRFEKAGLSVVAAKMVQLSEREAGGFYAEHKERPFFKDLVSFMTSGPVVVQVLEGEGAIAKNRELMGATDPKKAEPGTIRADFAVSIDENAVHGSDSEASAAREIAYFFAATEVCARIR.

Residues K11, F59, R87, T93, R104, and N114 each coordinate ATP. The active-site Pros-phosphohistidine intermediate is H117.

This sequence belongs to the NDK family. In terms of assembly, homotetramer. Mg(2+) serves as cofactor.

Its subcellular location is the cytoplasm. It carries out the reaction a 2'-deoxyribonucleoside 5'-diphosphate + ATP = a 2'-deoxyribonucleoside 5'-triphosphate + ADP. The enzyme catalyses a ribonucleoside 5'-diphosphate + ATP = a ribonucleoside 5'-triphosphate + ADP. Its function is as follows. Major role in the synthesis of nucleoside triphosphates other than ATP. The ATP gamma phosphate is transferred to the NDP beta phosphate via a ping-pong mechanism, using a phosphorylated active-site intermediate. This Azotobacter vinelandii (strain DJ / ATCC BAA-1303) protein is Nucleoside diphosphate kinase.